The primary structure comprises 174 residues: Larval cuticle protein A1A (174 aa).

2 repeat units span residues 45-48 (AAPV) and 67-70 (AAPV). Residues 84 to 150 (NPQYSFGYDV…AVVHREPLVA (67 aa)) form the Chitin-binding type R&amp;R domain. Repeat 3 spans residues 155 to 158 (AAPA).

Component of the cuticle of the larva of Tenebrio molitor. This Tenebrio molitor (Yellow mealworm beetle) protein is Larval cuticle protein A1A.